We begin with the raw amino-acid sequence, 149 residues long: Transcriptional repressor NrdR (149 aa).

Residues 3-34 fold into a zinc finger; the sequence is CPFCFAVDTKVIDSRLVGEGSSVRRRRQCLVC. Positions 49 to 139 constitute an ATP-cone domain; sequence PRVVKSNDVR…VYRSFEDIKE (91 aa).

This sequence belongs to the NrdR family. The cofactor is Zn(2+).

Functionally, negatively regulates transcription of bacterial ribonucleotide reductase nrd genes and operons by binding to NrdR-boxes. The polypeptide is Transcriptional repressor NrdR (Escherichia coli O139:H28 (strain E24377A / ETEC)).